The chain runs to 364 residues: Endoglucanase A (364 aa).

The active-site Proton donor is the E169. E293 serves as the catalytic Nucleophile.

The protein belongs to the glycosyl hydrolase 5 (cellulase A) family.

It is found in the cytoplasm. The catalysed reaction is Endohydrolysis of (1-&gt;4)-beta-D-glucosidic linkages in cellulose, lichenin and cereal beta-D-glucans.. The enzyme catalyses Endohydrolysis of (1-&gt;4)-beta-D-xylosidic linkages in xylans.. Hydrolyzes both carboxymethylcellulose and xylan. Probably has a role in hydrolyzing oligosaccharides derived from cellulose, which are transported across the cell wall. This is Endoglucanase A (celA) from Ruminococcus albus.